The chain runs to 212 residues: Protein-L-isoaspartate O-methyltransferase (212 aa).

Residue S60 is part of the active site.

The protein belongs to the methyltransferase superfamily. L-isoaspartyl/D-aspartyl protein methyltransferase family.

Its subcellular location is the cytoplasm. The enzyme catalyses [protein]-L-isoaspartate + S-adenosyl-L-methionine = [protein]-L-isoaspartate alpha-methyl ester + S-adenosyl-L-homocysteine. Its function is as follows. Catalyzes the methyl esterification of L-isoaspartyl residues in peptides and proteins that result from spontaneous decomposition of normal L-aspartyl and L-asparaginyl residues. It plays a role in the repair and/or degradation of damaged proteins. This chain is Protein-L-isoaspartate O-methyltransferase, found in Pseudomonas putida (strain W619).